Consider the following 25-residue polypeptide: Antimicrobial peptide 3 (25 aa).

As to expression, skin.

Its subcellular location is the secreted. Has antibacterial activity against Gram-positive bacterium S.aureus and Gram-negative bacterium E.coli, when in combination with XT1 and XT6. This chain is Antimicrobial peptide 3, found in Xenopus tropicalis (Western clawed frog).